A 65-amino-acid polypeptide reads, in one-letter code: Ferredoxin-1 (65 aa).

Positions Arg3–Glu31 constitute a 4Fe-4S ferredoxin-type domain. Residues Cys12, Cys15, Cys18, and Cys55 each contribute to the [4Fe-4S] cluster site.

In terms of assembly, homodimer. It depends on [4Fe-4S] cluster as a cofactor.

Its function is as follows. Ferredoxins are iron-sulfur proteins that transfer electrons in a wide variety of metabolic reactions. The polypeptide is Ferredoxin-1 (fd1) (Desulfocurvibacter africanus (Desulfovibrio africanus)).